Reading from the N-terminus, the 482-residue chain is Programmed cell death protein 7 (482 aa).

Disordered regions lie at residues 1 to 136 (MALP…GDAA) and 151 to 170 (GNPR…GPSL). Residues 13-48 (GPPPPQPPPSAPFGCPPPPLPSPAFPPPLPQRPGPF) are compositionally biased toward pro residues. The span at 49–71 (PGASAPFLQPPLALQPRAPAEAS) shows a compositional bias: low complexity. Composition is skewed to pro residues over residues 82-100 (PVPP…PFPG) and 109-130 (PPPP…PPPD). The segment covering 151 to 168 (GNPRRPGGLRTPRTPAGP) has biased composition (low complexity). Residues 233–408 (EARRRLERVR…LQKREIESKL (176 aa)) are a coiled coil.

Interacts with RBM40. Component of the U11/U12 snRNPs that are part of the U12-type spliceosome. Highly expressed in testis, thymus and lymph nodes. Detected at low levels in embryonic stem cells.

The protein localises to the nucleus. Promotes apoptosis when overexpressed. This is Programmed cell death protein 7 (Pdcd7) from Mus musculus (Mouse).